Consider the following 860-residue polypeptide: LPS-assembly protein LptD (860 aa).

The signal sequence occupies residues 1-21 (MTKRYFSLLAVCSAIATSTFA).

The protein belongs to the LptD family. In terms of assembly, component of the lipopolysaccharide transport and assembly complex. Interacts with LptE and LptA.

It is found in the cell outer membrane. Together with LptE, is involved in the assembly of lipopolysaccharide (LPS) at the surface of the outer membrane. This is LPS-assembly protein LptD from Saccharophagus degradans (strain 2-40 / ATCC 43961 / DSM 17024).